Reading from the N-terminus, the 118-residue chain is Large ribosomal subunit protein bL20 (118 aa).

Belongs to the bacterial ribosomal protein bL20 family.

Binds directly to 23S ribosomal RNA and is necessary for the in vitro assembly process of the 50S ribosomal subunit. It is not involved in the protein synthesizing functions of that subunit. This chain is Large ribosomal subunit protein bL20, found in Oceanobacillus iheyensis (strain DSM 14371 / CIP 107618 / JCM 11309 / KCTC 3954 / HTE831).